Consider the following 1044-residue polypeptide: Translation initiation factor IF-2 (1044 aa).

The disordered stretch occupies residues 55 to 458 (EAQEGQGAGK…KRKASAQERR (404 aa)). Low complexity predominate over residues 57–77 (QEGQGAGKSAAKSAKPAAQPK). Residues 104–146 (LSEKRERRPLTERRPLAERRPLAERPLVDRPVTERPLAERPAA) show a composition bias toward basic and acidic residues. Composition is skewed to low complexity over residues 147-168 (ELRP…AQPV), 190-231 (KAQP…QKPA), and 254-265 (ASSRPASAAPAA). Residues 267 to 281 (GEKRPAAAAERREEP) are compositionally biased toward basic and acidic residues. Composition is skewed to low complexity over residues 352-375 (AAGQ…AGAP) and 383-395 (APQR…APLA). The segment covering 399 to 444 (LDPKVAEQAKAGEGKPRYGQSGDKRRADLYDRREHPSSQPSEEKLF) has biased composition (basic and acidic residues). Residues 546–714 (PRHPVVTIMG…ILVLAEVSDL (169 aa)) enclose the tr-type G domain. Residues 555–562 (GHVDHGKT) form a G1 region. Residue 555 to 562 (GHVDHGKT) coordinates GTP. Residues 580 to 584 (GITQH) are G2. Residues 601 to 604 (DTPG) form a G3 region. Residues 601 to 605 (DTPGH) and 655 to 658 (NKID) contribute to the GTP site. A G4 region spans residues 655 to 658 (NKID). The G5 stretch occupies residues 691–693 (SAK).

This sequence belongs to the TRAFAC class translation factor GTPase superfamily. Classic translation factor GTPase family. IF-2 subfamily.

Its subcellular location is the cytoplasm. Functionally, one of the essential components for the initiation of protein synthesis. Protects formylmethionyl-tRNA from spontaneous hydrolysis and promotes its binding to the 30S ribosomal subunits. Also involved in the hydrolysis of GTP during the formation of the 70S ribosomal complex. The sequence is that of Translation initiation factor IF-2 from Symbiobacterium thermophilum (strain DSM 24528 / JCM 14929 / IAM 14863 / T).